The sequence spans 26 residues: Mucus envelope protein (26 aa).

Post-translationally, glycosylated. Produced by the opercular gland in the gill cavity and secreted as part of the mucus cocoon.

Its subcellular location is the secreted. In terms of biological role, exhibits antibacterial activity. May play a role in protection against parasite settlement. The chain is Mucus envelope protein from Scarus vetula (Queen parrotfish).